The following is a 292-amino-acid chain: uncharacterized protein (292 aa).

10 helical membrane-spanning segments follow: residues 6-26, 32-52, 68-88, 94-114, 123-143, 147-167, 182-202, 214-234, 242-262, and 265-285; these read LGII…KVGI, LLFS…ILFI, IIMS…GMQF, TSVL…FSLN, MGLV…MLNI, ALFG…ANVF, AWHL…FEAV, SLLF…FWVL, ASMA…LQLH, and ITIN…MNTF. EamA domains follow at residues 13 to 137 and 159 to 285; these read LIWG…FIFG and LSWG…MNTF.

The protein belongs to the EamA transporter family.

The protein localises to the cell membrane. This is an uncharacterized protein from Bacillus subtilis (strain 168).